Here is a 293-residue protein sequence, read N- to C-terminus: TBC1 domain family member 7 (293 aa).

The Rab-GAP TBC domain maps to Pro50–Ser231.

In terms of assembly, component of the TSC-TBC complex (also named Rhebulator complex), composed of 2 molecules of TSC1, 2 molecules of TSC2 and 1 molecule of TBC1D7. Interacts with TSC1 (via C-terminal half of the coiled-coil domain). Highly expressed in heart, and slightly in kidney, liver and placenta.

The protein resides in the lysosome membrane. Its subcellular location is the cytoplasmic vesicle. The protein localises to the cytoplasm. It is found in the cytosol. In terms of biological role, non-catalytic component of the TSC-TBC complex, a multiprotein complex that acts as a negative regulator of the canonical mTORC1 complex, an evolutionarily conserved central nutrient sensor that stimulates anabolic reactions and macromolecule biosynthesis to promote cellular biomass generation and growth. The TSC-TBC complex acts as a GTPase-activating protein (GAP) for the small GTPase RHEB, a direct activator of the protein kinase activity of mTORC1. In absence of nutrients, the TSC-TBC complex inhibits mTORC1, thereby preventing phosphorylation of ribosomal protein S6 kinase (RPS6KB1 and RPS6KB2) and EIF4EBP1 (4E-BP1) by the mTORC1 signaling. The TSC-TBC complex is inactivated in response to nutrients, relieving inhibition of mTORC1. The sequence is that of TBC1 domain family member 7 from Homo sapiens (Human).